We begin with the raw amino-acid sequence, 267 residues long: Cell division control protein 11 (267 aa).

The 258-residue stretch at 6–263 (QNRRFTIMAA…ENYRAAVLEG (258 aa)) folds into the Septin-type G domain. A G1 motif region spans residues 16-23 (GPRGSGKS). GTP is bound by residues 16–23 (GPRGSGKS), Gly66, 146–154 (KSDGLSITE), and Arg212. The interval 63 to 66 (DTPG) is G3 motif. A G4 motif region spans residues 145 to 148 (SKSD).

Belongs to the TRAFAC class TrmE-Era-EngA-EngB-Septin-like GTPase superfamily. Septin GTPase family. In terms of assembly, component of the septin complex.

In terms of biological role, septins are GTPases involved in cytokinesis. The septins localize to the site of cleavage and act as a structural scaffold that recruits different components involved in diverse processes at specific stages during the cell cycle. Septins are also involved in cell morphogenesis, chitin deposition, cell cycle regulation, cell compartmentalization and spore wall formation. The polypeptide is Cell division control protein 11 (CDC11) (Encephalitozoon cuniculi (strain GB-M1) (Microsporidian parasite)).